Here is a 160-residue protein sequence, read N- to C-terminus: Aspartate 1-decarboxylase 2 (160 aa).

The Schiff-base intermediate with substrate; via pyruvic acid role is filled by Ser-25. At Ser-25 the chain carries Pyruvic acid (Ser). Thr-57 serves as a coordination point for substrate. The Proton donor role is filled by Tyr-58. Position 73–75 (73–75 (GAA)) interacts with substrate.

Belongs to the PanD family. Heterooctamer of four alpha and four beta subunits. Pyruvate is required as a cofactor. Is synthesized initially as an inactive proenzyme, which is activated by self-cleavage at a specific serine bond to produce a beta-subunit with a hydroxyl group at its C-terminus and an alpha-subunit with a pyruvoyl group at its N-terminus.

It localises to the cytoplasm. It catalyses the reaction L-aspartate + H(+) = beta-alanine + CO2. Its pathway is cofactor biosynthesis; (R)-pantothenate biosynthesis; beta-alanine from L-aspartate: step 1/1. In terms of biological role, catalyzes the pyruvoyl-dependent decarboxylation of aspartate to produce beta-alanine. This Frankia casuarinae (strain DSM 45818 / CECT 9043 / HFP020203 / CcI3) protein is Aspartate 1-decarboxylase 2.